Here is a 156-residue protein sequence, read N- to C-terminus: uncharacterized protein (156 aa).

Residues 1–145 form the N-acetyltransferase domain; sequence MIIRKFSSKD…DAILMIKKKP (145 aa).

The protein belongs to the acetyltransferase family.

It localises to the cytoplasm. This is an uncharacterized protein from Methanocaldococcus jannaschii (strain ATCC 43067 / DSM 2661 / JAL-1 / JCM 10045 / NBRC 100440) (Methanococcus jannaschii).